Reading from the N-terminus, the 379-residue chain is NuA4 complex subunit EAF3 homolog (379 aa).

Positions 6-61 (EENEKVLVHHQNRIYEAKIIKVDPKTSKSDKKKPLYFIHYLGWKEKWNEWIEPNKI) constitute a Tudor-knot domain. The tract at residues 75–212 (TNIKASTTSL…KRNDSKSSHF (138 aa)) is disordered. Residues 78–87 (KASTTSLNNK) show a composition bias toward low complexity. Over residues 111–141 (ENSDEDENESELEDGGGEDADEGGEDIEDQE) the composition is skewed to acidic residues. Positions 165–199 (SSSSSSSSKSNNNNNNNNNNNNNNNNNNNNNNNNN) are enriched in low complexity. The MRG domain maps to 214–377 (STKFIDIEIP…ASSPYLKAAS (164 aa)).

Component of the NuA4 histone acetyltransferase complex.

Its subcellular location is the nucleus. In terms of biological role, component of the NuA4 histone acetyltransferase complex which is involved in transcriptional activation of selected genes principally by acetylation of nucleosomal histone H4 and H2A. The NuA4 complex is also involved in DNA repair. Also a component of a complex which acts to repress transcription by deacetylation of nucleosomal histones. In Dictyostelium discoideum (Social amoeba), this protein is NuA4 complex subunit EAF3 homolog.